Consider the following 135-residue polypeptide: Large ribosomal subunit protein bL21 (135 aa).

Over residues 109-128 (TLATAQSAPPSTSEATTDTT) the composition is skewed to polar residues. Residues 109-135 (TLATAQSAPPSTSEATTDTTGIPAAEE) are disordered.

It belongs to the bacterial ribosomal protein bL21 family. In terms of assembly, part of the 50S ribosomal subunit. Contacts protein L20.

This protein binds to 23S rRNA in the presence of protein L20. In Synechococcus sp. (strain JA-3-3Ab) (Cyanobacteria bacterium Yellowstone A-Prime), this protein is Large ribosomal subunit protein bL21.